The following is a 268-amino-acid chain: Hydroxyethylthiazole kinase (268 aa).

Residue methionine 46 participates in substrate binding. Arginine 122 and threonine 168 together coordinate ATP. Glycine 195 contacts substrate.

The protein belongs to the Thz kinase family. It depends on Mg(2+) as a cofactor.

The enzyme catalyses 5-(2-hydroxyethyl)-4-methylthiazole + ATP = 4-methyl-5-(2-phosphooxyethyl)-thiazole + ADP + H(+). It functions in the pathway cofactor biosynthesis; thiamine diphosphate biosynthesis; 4-methyl-5-(2-phosphoethyl)-thiazole from 5-(2-hydroxyethyl)-4-methylthiazole: step 1/1. Catalyzes the phosphorylation of the hydroxyl group of 4-methyl-5-beta-hydroxyethylthiazole (THZ). The protein is Hydroxyethylthiazole kinase of Desulfatibacillum aliphaticivorans.